Reading from the N-terminus, the 391-residue chain is Elongation factor Tu (391 aa).

Residues 10-201 (KPHVNIGTIG…AVDEYIPTPA (192 aa)) enclose the tr-type G domain. Residues 19–26 (GHVDHGKT) are G1. 19 to 26 (GHVDHGKT) contacts GTP. Threonine 26 serves as a coordination point for Mg(2+). The G2 stretch occupies residues 55–59 (GITIS). Residues 76–79 (DCPG) are G3. GTP-binding positions include 76 to 80 (DCPGH) and 131 to 134 (NKVD). The tract at residues 131–134 (NKVD) is G4. A G5 region spans residues 169–171 (SAL).

The protein belongs to the TRAFAC class translation factor GTPase superfamily. Classic translation factor GTPase family. EF-Tu/EF-1A subfamily. Monomer.

It localises to the cytoplasm. It carries out the reaction GTP + H2O = GDP + phosphate + H(+). Functionally, GTP hydrolase that promotes the GTP-dependent binding of aminoacyl-tRNA to the A-site of ribosomes during protein biosynthesis. This Ruegeria pomeroyi (strain ATCC 700808 / DSM 15171 / DSS-3) (Silicibacter pomeroyi) protein is Elongation factor Tu.